Consider the following 488-residue polypeptide: MLIFDRSREGRACASLFPQTPADIRGLPGHLLRQTPPPLPEVTELDVVRHYTRLSQKNFSIDTHFYPLGSCTMKYNPKAANVLARQPGFAALHPLGTERFGQGTLSCLYELQEYLKTLTGMTAVSLSPAAGAQGEFCGVAMIRAYHDARNDHERNEILVPDAAHGTNPASAAMCGYQVREIPTNADGDVDLEALKQAVGPKTAGIMLTNPSTLGVFEHRIPEIAALVHEAGGLLYYDGANLNAILGKVRPGDMGFDVIHLNLHKTFSTPHGGGGPGAGPVGVNARLQPFLPLPMVARSGNGYRWLAESDRPQSIGRLSAFAGNVGVLLRAYVYIRLLGYPGLRRVAEYATLNANYLQKRLVEAGFDTAFPARRAAHEFILSVQRQKKEHHVTALDFAKRLLDYGFHAPTVYFPLLIPECLMIEPTETENKETLDAFVDAMAAILKEAAEEPERLGQAPHCTPVRRLDEARAARHPDLAWKPAAPVPPR.

Lys-264 bears the N6-(pyridoxal phosphate)lysine mark.

The protein belongs to the GcvP family. C-terminal subunit subfamily. As to quaternary structure, the glycine cleavage system is composed of four proteins: P, T, L and H. In this organism, the P 'protein' is a heterodimer of two subunits. Pyridoxal 5'-phosphate is required as a cofactor.

It catalyses the reaction N(6)-[(R)-lipoyl]-L-lysyl-[glycine-cleavage complex H protein] + glycine + H(+) = N(6)-[(R)-S(8)-aminomethyldihydrolipoyl]-L-lysyl-[glycine-cleavage complex H protein] + CO2. Its function is as follows. The glycine cleavage system catalyzes the degradation of glycine. The P protein binds the alpha-amino group of glycine through its pyridoxal phosphate cofactor; CO(2) is released and the remaining methylamine moiety is then transferred to the lipoamide cofactor of the H protein. The polypeptide is Probable glycine dehydrogenase (decarboxylating) subunit 2 (Methylococcus capsulatus (strain ATCC 33009 / NCIMB 11132 / Bath)).